The primary structure comprises 158 residues: Protein Smg homolog (158 aa).

The protein belongs to the Smg family.

The protein is Protein Smg homolog of Coxiella burnetii (strain Dugway 5J108-111).